The following is a 372-amino-acid chain: MSAVPTHEAEPYVGLMSGTSLDGIDAVLAEIGTGNQVRLLRTRYIHYPDDLRAQLLALHTPQADEVHLAALAANALARLYAEAVGALLEGIDPAKIRAIGCHGQTLRHRPGDGYTIQIGNASLLAELAGIAVVSDFRSRDIAAGGQGAPLVPAFHARVLAHPEIHRVIANVGGIANITDLPPNGPIRGWDTGPGNMLMDAWIHRHQGSRYDRDGSWAAEGSVAAGLLQALLRHPYLEQRPPKSAGREQFNLESLDTTLAGLGQRLEPGTVQATLLEFTAVSLCDAVTQECRGAQELYVCGGGAHNGALMRRIAALLPHVRVTTTADLGIDPDWVEALAFAWLARQTMHGEAGNLPAVTGACGERILGAIHPA.

18-25 (GTSLDGID) is an ATP binding site.

Belongs to the anhydro-N-acetylmuramic acid kinase family.

It catalyses the reaction 1,6-anhydro-N-acetyl-beta-muramate + ATP + H2O = N-acetyl-D-muramate 6-phosphate + ADP + H(+). It participates in amino-sugar metabolism; 1,6-anhydro-N-acetylmuramate degradation. It functions in the pathway cell wall biogenesis; peptidoglycan recycling. Catalyzes the specific phosphorylation of 1,6-anhydro-N-acetylmuramic acid (anhMurNAc) with the simultaneous cleavage of the 1,6-anhydro ring, generating MurNAc-6-P. Is required for the utilization of anhMurNAc either imported from the medium or derived from its own cell wall murein, and thus plays a role in cell wall recycling. The protein is Anhydro-N-acetylmuramic acid kinase of Thiobacillus denitrificans (strain ATCC 25259 / T1).